The chain runs to 454 residues: UDP-N-acetylmuramoylalanine--D-glutamate ligase (454 aa).

114–120 (GTNGKTT) serves as a coordination point for ATP.

Belongs to the MurCDEF family.

It is found in the cytoplasm. It carries out the reaction UDP-N-acetyl-alpha-D-muramoyl-L-alanine + D-glutamate + ATP = UDP-N-acetyl-alpha-D-muramoyl-L-alanyl-D-glutamate + ADP + phosphate + H(+). The protein operates within cell wall biogenesis; peptidoglycan biosynthesis. Cell wall formation. Catalyzes the addition of glutamate to the nucleotide precursor UDP-N-acetylmuramoyl-L-alanine (UMA). This is UDP-N-acetylmuramoylalanine--D-glutamate ligase from Desulfitobacterium hafniense (strain Y51).